The chain runs to 511 residues: Maturase K (511 aa).

Belongs to the intron maturase 2 family. MatK subfamily.

Its subcellular location is the plastid. The protein localises to the chloroplast. In terms of biological role, usually encoded in the trnK tRNA gene intron. Probably assists in splicing its own and other chloroplast group II introns. The sequence is that of Maturase K from Paulownia tomentosa (Princess tree).